A 350-amino-acid polypeptide reads, in one-letter code: Hepatocyte nuclear factor 3-gamma (350 aa).

Residues 116–207 (AKPPYSYISL…GNMFENGCYL (92 aa)) constitute a DNA-binding region (fork-head). Residues 217 to 276 (EKVKKGGSGAATTTRNGTGSAASTTTPAATVTSPPQPPPPAPEPEAQGGEDVGALDCGSP) are disordered. Residues 226–249 (AATTTRNGTGSAASTTTPAATVTS) are compositionally biased toward low complexity. Pro residues predominate over residues 250–259 (PPQPPPPAPE).

In terms of assembly, interacts with FOXA2. In terms of tissue distribution, expressed in erythroleukemia and hepatoma cell lines and in liver and pancreas. Not expressed in any other cell lines or tissues examined.

It localises to the nucleus. Functionally, transcription factor that is thought to act as a 'pioneer' factor opening the compacted chromatin for other proteins through interactions with nucleosomal core histones and thereby replacing linker histones at target enhancer and/or promoter sites. Originally described as a transcription activator for a number of liver genes such as AFP, albumin, tyrosine aminotransferase, PEPCK, etc. Interacts with the cis-acting regulatory regions of these genes. Involved in glucose homeostasis; binds to and activates transcription from the G6PC1 promoter. Binds to the CYP3A4 promoter and activates its transcription in cooperation with CEBPA. Binds to the CYP3A7 promoter together with members of the CTF/NF-I family. Involved in regulation of neuronal-specific transcription. May be involved in regulation of spermatogenesis. The chain is Hepatocyte nuclear factor 3-gamma (FOXA3) from Homo sapiens (Human).